We begin with the raw amino-acid sequence, 174 residues long: Regenerating islet-derived protein 3-gamma (174 aa).

Residues 1–26 (MLPRITITIMSWMLLSCLMLLSQVQG) form the signal peptide. A propeptide spanning residues 27 to 37 (EVAKKDAPSSR) is cleaved from the precursor. 3 disulfide bridges follow: Cys40–Cys51, Cys68–Cys170, and Cys145–Cys162. A C-type lectin domain is found at 47–171 (YGSYCYALFS…CNLELPYVCK (125 aa)). A sufficient to activate EXTL3 region spans residues 103-118 (WIGLHDPTLGYEPNRG). A Zn(2+)-binding site is contributed by His107. An EPN motif is present at residues 114–116 (EPN). Zn(2+) is bound by residues Glu121 and His144.

Forms a hexameric membrane-permeabilizing oligomeric pore on membrane phospholipids. The hexamer is formed by three dimers related by helical symmetry. Forms filaments, filamentation traps pore complexes and limits damage to host cells. Interacts with EXTL3. Post-translationally, proteolytic processing by trypsin removes an inhibitory N-terminal propeptide and is essential for peptidoglycan binding and antibacterial activity. As to expression, predominantly expressed in the small intestine, including Paneth cells (at protein level). Hardly detectable in the colon (at protein level). Highly expressed in the lung epithelium during methicillin-resistant S.aureus infection and allergic airway inflammation (at protein level). Skin injury increases its epidermal expression. Also expressed in the pancreas. Expressed by nocireceptors.

It localises to the secreted. Its subcellular location is the cytoplasm. Its activity is regulated as follows. Lipopolysaccharide inhibits pore-forming activity, explaining why is bactericidal for Gram-positive but not Gram-negative bacteria. Functionally, bactericidal C-type lectin which acts exclusively against Gram-positive bacteria and mediates bacterial killing by binding to surface-exposed carbohydrate moieties of peptidoglycan. Restricts bacterial colonization of the intestinal epithelial surface and consequently limits activation of adaptive immune responses by the microbiota. In terms of biological role, acts as a hormone in response to different stimuli like anti-inflammatory signals, such as IL17A, or gut microbiome. Is secreted by different cell types to activate its receptor EXTL3 and induce cell specific signaling pathways. Induced by IL17A in keratinocytes, regulates keratinocyte proliferation and differentiation after skin injury. In parallel, inhibits skin inflammation through the inhibition of inflammatory cytokines such as IL6 and TNF. Induced by IL22 in lung epithelial cells, inhibits cytokine production and regulates allergic airway inflammation. Induced in small intestine by inulin-enriched diet and Lactobacillus gasseri enriched microbiome, plays a role in the improvement of gut barrier function, the regulation of energy balance and glucose levels. Modulates microbiota composition in duodenal contents. Produced by nociceptor in response to endotoxins, prevents endotoxic death by targeting kynurenine pathway in microglia. Has bacteriostatic activity. Its function is as follows. Has bactericidal activity against L.monocytogenes and methicillin-resistant S.aureus. The protein is Regenerating islet-derived protein 3-gamma of Mus musculus (Mouse).